The following is a 940-amino-acid chain: Gamma-aminobutyric acid type B receptor subunit 2 (940 aa).

A signal peptide spans 1–40; the sequence is MASPPSSGQPRPPPPPPPPARLLLPLLLSLLLWLAPGAWG. At 41 to 482 the chain is on the extracellular side; sequence WTRGAPRPPP…LRKISLPLYS (442 aa). N-linked (GlcNAc...) asparagine glycosylation is present at N89. 3 disulfide bridges follow: C107-C134, C236-C265, and C264-C301. N297, N388, N403, and N452 each carry an N-linked (GlcNAc...) asparagine glycan. A helical transmembrane segment spans residues 483 to 503; that stretch reads ILSALTILGMIMASAFLFFNI. Residues 504–521 are Cytoplasmic-facing; that stretch reads KNRNQKLIKMSSPYMNNL. The helical transmembrane segment at 522–542 threads the bilayer; that stretch reads IILGGMLSYASIFLFGLDGSF. Residues 543–550 lie on the Extracellular side of the membrane; the sequence is VSEKTFET. The helical transmembrane segment at 551–571 threads the bilayer; sequence LCTVRTWILTVGYTTAFGAMF. Residues 572–596 lie on the Cytoplasmic side of the membrane; the sequence is AKTWRVHAIFKNVKMKKKIIKDQKL. A helical membrane pass occupies residues 597 to 617; it reads LVIVGGMLLIDLCILICWQAV. At 618–653 the chain is on the extracellular side; it reads DPLRRTVERYSMEPDPAGRDISIRPLLEHCENTHMT. A helical membrane pass occupies residues 654 to 674; that stretch reads IWLGIVYAYKGLLMLFGCFLA. Residues 675–690 lie on the Cytoplasmic side of the membrane; that stretch reads WETRNVSIPALNDSKY. Residues 691 to 711 form a helical membrane-spanning segment; that stretch reads IGMSVYNVGIMCIIGAAVSFL. Over 712–719 the chain is Extracellular; the sequence is TRDQPNVQ. The helical transmembrane segment at 720 to 740 threads the bilayer; the sequence is FCIVALVIIFCSTITLCLVFV. The Cytoplasmic portion of the chain corresponds to 741–940; it reads PKLITLRTNP…PSFRVMVSGL (200 aa). The disordered stretch occupies residues 762 to 789; it reads TQNQKKEDSKTSTSVTSVNQASTSRLEG. Polar residues predominate over residues 772 to 786; that stretch reads TSTSVTSVNQASTSR. S775 and S778 each carry phosphoserine. Residues 780–818 are a coiled coil; sequence NQASTSRLEGLQSENHRLRMKITELDKDLEEVTMQLQDT. T818 carries the post-translational modification Phosphothreonine. Phosphoserine occurs at positions 883, 892, 912, 915, 919, and 923.

It belongs to the G-protein coupled receptor 3 family. GABA-B receptor subfamily. As to quaternary structure, heterodimer of GABBR1 and GABBR2. Homodimers may form, but are inactive. Interacts (via C-terminus) with ATF4 (via leucine zipper domain). Interacts with KCTD8, KCTD12 and KCTD16; this interaction determines the pharmacology and kinetics of the receptor response, the KCTD proteins markedly accelerating the GABA-B response, although to different extents. In terms of tissue distribution, highly expressed in areas of the brain including thalamic nuclei, the hippocampus, cerebellar Purkinje cells and the medial habenula, and moderately expressed in the cerebral cortex, certain anterioventral thalamic nuclei, dorsal medial hypothalamic nucleus and suprachiasmatic nuclei. Also weakly expressed in the testis.

The protein resides in the cell membrane. It is found in the postsynaptic cell membrane. It localises to the perikaryon. Its subcellular location is the cell projection. The protein localises to the dendrite. In terms of biological role, component of a heterodimeric G-protein coupled receptor for GABA, formed by GABBR1 and GABBR2. Within the heterodimeric GABA receptor, only GABBR1 seems to bind agonists, while GABBR2 mediates coupling to G proteins. Ligand binding causes a conformation change that triggers signaling via guanine nucleotide-binding proteins (G proteins) and modulates the activity of down-stream effectors, such as adenylate cyclase. Signaling inhibits adenylate cyclase, stimulates phospholipase A2, activates potassium channels, inactivates voltage-dependent calcium-channels and modulates inositol phospholipid hydrolysis. Plays a critical role in the fine-tuning of inhibitory synaptic transmission. Pre-synaptic GABA receptor inhibits neurotransmitter release by down-regulating high-voltage activated calcium channels, whereas postsynaptic GABA receptor decreases neuronal excitability by activating a prominent inwardly rectifying potassium (Kir) conductance that underlies the late inhibitory postsynaptic potentials. Not only implicated in synaptic inhibition but also in hippocampal long-term potentiation, slow wave sleep, muscle relaxation and antinociception. The sequence is that of Gamma-aminobutyric acid type B receptor subunit 2 (Gabbr2) from Rattus norvegicus (Rat).